The primary structure comprises 227 residues: MAYSFQLGLQDATSPIMEELMNFHDHTLMIVFLISSLVLYIISLMLTTKLTHTSTMDAQEVETIWTILPAVILIMIALPSLRILYMMDEINNPVLTVKTMGHQWYWSYEYTDYEDLCFDSYMIPTNDLKPGELRLLEVDNRVVLPMELPIRMLVSSEDVLHSWAVPSLGLKTDAIPGRLNQATVTSNRPGLFYGQCSEICGSNHSFMPIVLEMVPLKHFENWSASMI.

The Mitochondrial intermembrane portion of the chain corresponds to 1 to 14 (MAYSFQLGLQDATS). Residues 15 to 45 (PIMEELMNFHDHTLMIVFLISSLVLYIISLM) traverse the membrane as a helical segment. At 46–59 (LTTKLTHTSTMDAQ) the chain is on the mitochondrial matrix side. Residues 60–87 (EVETIWTILPAVILIMIALPSLRILYMM) form a helical membrane-spanning segment. The Mitochondrial intermembrane segment spans residues 88 to 227 (DEINNPVLTV…HFENWSASMI (140 aa)). Cu cation contacts are provided by H161, C196, E198, C200, H204, and M207. Mg(2+) is bound at residue E198.

The protein belongs to the cytochrome c oxidase subunit 2 family. As to quaternary structure, component of the cytochrome c oxidase (complex IV, CIV), a multisubunit enzyme composed of 14 subunits. The complex is composed of a catalytic core of 3 subunits MT-CO1, MT-CO2 and MT-CO3, encoded in the mitochondrial DNA, and 11 supernumerary subunits COX4I, COX5A, COX5B, COX6A, COX6B, COX6C, COX7A, COX7B, COX7C, COX8 and NDUFA4, which are encoded in the nuclear genome. The complex exists as a monomer or a dimer and forms supercomplexes (SCs) in the inner mitochondrial membrane with NADH-ubiquinone oxidoreductase (complex I, CI) and ubiquinol-cytochrome c oxidoreductase (cytochrome b-c1 complex, complex III, CIII), resulting in different assemblies (supercomplex SCI(1)III(2)IV(1) and megacomplex MCI(2)III(2)IV(2)). Found in a complex with TMEM177, COA6, COX18, COX20, SCO1 and SCO2. Interacts with TMEM177 in a COX20-dependent manner. Interacts with COX20. Interacts with COX16. Requires Cu cation as cofactor.

Its subcellular location is the mitochondrion inner membrane. It carries out the reaction 4 Fe(II)-[cytochrome c] + O2 + 8 H(+)(in) = 4 Fe(III)-[cytochrome c] + 2 H2O + 4 H(+)(out). In terms of biological role, component of the cytochrome c oxidase, the last enzyme in the mitochondrial electron transport chain which drives oxidative phosphorylation. The respiratory chain contains 3 multisubunit complexes succinate dehydrogenase (complex II, CII), ubiquinol-cytochrome c oxidoreductase (cytochrome b-c1 complex, complex III, CIII) and cytochrome c oxidase (complex IV, CIV), that cooperate to transfer electrons derived from NADH and succinate to molecular oxygen, creating an electrochemical gradient over the inner membrane that drives transmembrane transport and the ATP synthase. Cytochrome c oxidase is the component of the respiratory chain that catalyzes the reduction of oxygen to water. Electrons originating from reduced cytochrome c in the intermembrane space (IMS) are transferred via the dinuclear copper A center (CU(A)) of subunit 2 and heme A of subunit 1 to the active site in subunit 1, a binuclear center (BNC) formed by heme A3 and copper B (CU(B)). The BNC reduces molecular oxygen to 2 water molecules using 4 electrons from cytochrome c in the IMS and 4 protons from the mitochondrial matrix. This is Cytochrome c oxidase subunit 2 (MT-CO2) from Praomys jacksoni (African forest rat).